The chain runs to 509 residues: tRNA (guanine(37)-N(1))-methyltransferase (509 aa).

S-adenosyl-L-methionine is bound by residues His289, 327 to 328, 355 to 356, and Asn387; these read DL and DG. The disordered stretch occupies residues 478–509; sequence TRNPENHEDPPLKRQRTAEAFSDEKTQIVSNT.

It belongs to the class I-like SAM-binding methyltransferase superfamily. TRM5/TYW2 family. As to quaternary structure, monomer.

The protein resides in the mitochondrion matrix. Its subcellular location is the nucleus. It localises to the cytoplasm. The enzyme catalyses guanosine(37) in tRNA + S-adenosyl-L-methionine = N(1)-methylguanosine(37) in tRNA + S-adenosyl-L-homocysteine + H(+). Functionally, involved in mitochondrial tRNA methylation. Specifically methylates the N1 position of guanosine-37 in various tRNAs. Methylation is not dependent on the nature of the nucleoside 5' of the target nucleoside. This is the first step in the biosynthesis of wybutosine (yW), a modified base adjacent to the anticodon of tRNAs and required for accurate decoding. In Homo sapiens (Human), this protein is tRNA (guanine(37)-N(1))-methyltransferase.